The following is a 150-amino-acid chain: Ribonuclease pancreatic delta-type (150 aa).

The N-terminal stretch at 1–25 (MGLEKSFILFSLLVLVLGWVQPSLG) is a signal peptide. Substrate is bound at residue R35. The active-site Proton acceptor is H37. 4 cysteine pairs are disulfide-bonded: C51/C110, C65/C121, C83/C136, and C90/C98. Substrate is bound by residues 66–70 (KRVNT), K91, and R111. The active-site Proton donor is H145.

The protein belongs to the pancreatic ribonuclease family. Monomer.

The protein localises to the secreted. It catalyses the reaction an [RNA] containing cytidine + H2O = an [RNA]-3'-cytidine-3'-phosphate + a 5'-hydroxy-ribonucleotide-3'-[RNA].. It carries out the reaction an [RNA] containing uridine + H2O = an [RNA]-3'-uridine-3'-phosphate + a 5'-hydroxy-ribonucleotide-3'-[RNA].. In terms of biological role, endonuclease that catalyzes the cleavage of RNA on the 3' side of pyrimidine nucleotides. Acts on single-stranded and double-stranded RNA. This is Ribonuclease pancreatic delta-type (Rnase1d) from Rattus norvegicus (Rat).